The primary structure comprises 81 residues: Sec-independent protein translocase protein TatA (81 aa).

Residues 1–21 (MGSLSLWHWIIVGAVLLLLFG) form a helical membrane-spanning segment. The tract at residues 41 to 81 (KKGLSEDDEKPEAARPAEPARSLDHQPVAEQPKVSETHRIG) is disordered.

It belongs to the TatA/E family. As to quaternary structure, the Tat system comprises two distinct complexes: a TatABC complex, containing multiple copies of TatA, TatB and TatC subunits, and a separate TatA complex, containing only TatA subunits. Substrates initially bind to the TatABC complex, which probably triggers association of the separate TatA complex to form the active translocon.

Its subcellular location is the cell inner membrane. Part of the twin-arginine translocation (Tat) system that transports large folded proteins containing a characteristic twin-arginine motif in their signal peptide across membranes. TatA could form the protein-conducting channel of the Tat system. In Beijerinckia indica subsp. indica (strain ATCC 9039 / DSM 1715 / NCIMB 8712), this protein is Sec-independent protein translocase protein TatA.